A 500-amino-acid chain; its full sequence is Probable cytosol aminopeptidase (500 aa).

Mn(2+) is bound by residues Lys264 and Asp269. Lys276 is a catalytic residue. Positions 287, 346, and 348 each coordinate Mn(2+). The active site involves Arg350.

Belongs to the peptidase M17 family. It depends on Mn(2+) as a cofactor.

The protein resides in the cytoplasm. The enzyme catalyses Release of an N-terminal amino acid, Xaa-|-Yaa-, in which Xaa is preferably Leu, but may be other amino acids including Pro although not Arg or Lys, and Yaa may be Pro. Amino acid amides and methyl esters are also readily hydrolyzed, but rates on arylamides are exceedingly low.. It catalyses the reaction Release of an N-terminal amino acid, preferentially leucine, but not glutamic or aspartic acids.. In terms of biological role, presumably involved in the processing and regular turnover of intracellular proteins. Catalyzes the removal of unsubstituted N-terminal amino acids from various peptides. In Rickettsia canadensis (strain McKiel), this protein is Probable cytosol aminopeptidase.